The chain runs to 24 residues: L-amino-acid oxidase (24 aa).

The protein belongs to the flavin monoamine oxidase family. FIG1 subfamily. As to quaternary structure, homodimer; non-covalently linked. Requires FAD as cofactor. N-glycosylated. As to expression, expressed by the venom gland.

Its subcellular location is the secreted. The catalysed reaction is an L-alpha-amino acid + O2 + H2O = a 2-oxocarboxylate + H2O2 + NH4(+). Its function is as follows. Catalyzes an oxidative deamination of predominantly hydrophobic and aromatic L-amino acids, thus producing hydrogen peroxide that may contribute to the diverse toxic effects of this enzyme. Exhibits diverse biological activities, such as hemorrhage, hemolysis, edema, apoptosis, and antiparasitic activities. This protein has antibacterial activity (against E.coli, S.aureus, and B.dysenteriae), cytotoxic activity, as well as an ability to induce platelet aggregation. Effects of snake L-amino oxidases on platelets are controversial, since they either induce aggregation or inhibit agonist-induced aggregation. These different effects are probably due to different experimental conditions. This Protobothrops mucrosquamatus (Taiwan habu) protein is L-amino-acid oxidase.